The chain runs to 31 residues: Photosystem II reaction center protein T (31 aa).

Residues 3–23 form a helical membrane-spanning segment; that stretch reads SFAYVLILTFAIATLFFAIAF.

This sequence belongs to the PsbT family. In terms of assembly, PSII is composed of 1 copy each of membrane proteins PsbA, PsbB, PsbC, PsbD, PsbE, PsbF, PsbH, PsbI, PsbJ, PsbK, PsbL, PsbM, PsbT, PsbX, PsbY, PsbZ, Psb30/Ycf12, peripheral proteins PsbO, CyanoQ (PsbQ), PsbU, PsbV and a large number of cofactors. It forms dimeric complexes.

It localises to the cellular thylakoid membrane. In terms of biological role, found at the monomer-monomer interface of the photosystem II (PS II) dimer, plays a role in assembly and dimerization of PSII. PSII is a light-driven water plastoquinone oxidoreductase, using light energy to abstract electrons from H(2)O, generating a proton gradient subsequently used for ATP formation. The polypeptide is Photosystem II reaction center protein T (Synechococcus sp. (strain CC9902)).